A 196-amino-acid chain; its full sequence is dTDP-4-dehydro-6-deoxyglucose 3-epimerase (196 aa).

Substrate is bound by residues arginine 21, glutamate 26, 45-47 (QVN), and arginine 57. Histidine 60 functions as the Proton acceptor in the catalytic mechanism. Substrate is bound by residues lysine 70 and arginine 117. Tyrosine 130 (proton donor) is an active-site residue. Glutamate 141 and arginine 166 together coordinate substrate.

The protein belongs to the dTDP-4-dehydrorhamnose 3,5-epimerase family. Homodimer.

The catalysed reaction is dTDP-4-dehydro-6-deoxy-alpha-D-glucose = dTDP-4-dehydro-6-deoxy-alpha-D-allose. Its pathway is antibiotic biosynthesis. Functionally, involved in the biosynthesis of dTDP-6-deoxy-D-allose, an intermediate in the biosynthesis of mycinose, which is one of the two unusual sugars attached to the 16-membered macrolactone ring of the aglycone antibiotic dihydrochalcomycin (GERI-155). Catalyzes the conversion of dTDP-4-oxo-6-deoxyglucose to dTDP-4-oxo-6-deoxyallose, via a C-3 epimerization. This Streptomyces sp protein is dTDP-4-dehydro-6-deoxyglucose 3-epimerase.